An 887-amino-acid chain; its full sequence is Probable alpha/beta-glucosidase agdC (887 aa).

The N-terminal stretch at 1–17 is a signal peptide; it reads MLRSLLLLAPMVGAAVA. N-linked (GlcNAc...) asparagine glycans are attached at residues N171, N293, and N373. Residue D422 is the Nucleophile of the active site. E425 is an active-site residue. Residues 457-483 are disordered; it reads PRPLPGFPDDFQPPAASKRSVAKGSKV. The active-site Proton donor is D571. 2 N-linked (GlcNAc...) asparagine glycosylation sites follow: N747 and N879.

This sequence belongs to the glycosyl hydrolase 31 family.

It localises to the secreted. It carries out the reaction Hydrolysis of terminal, non-reducing (1-&gt;4)-linked alpha-D-glucose residues with release of alpha-D-glucose.. The catalysed reaction is Hydrolysis of terminal, non-reducing beta-D-glucosyl residues with release of beta-D-glucose.. In terms of biological role, glucosidase involved in the degradation of cellulosic biomass. Has both alpha- and beta-glucosidase activity. The chain is Probable alpha/beta-glucosidase agdC (agdC) from Aspergillus clavatus (strain ATCC 1007 / CBS 513.65 / DSM 816 / NCTC 3887 / NRRL 1 / QM 1276 / 107).